Reading from the N-terminus, the 123-residue chain is Small ribosomal subunit protein uS12cz/uS12cy (123 aa).

The protein belongs to the universal ribosomal protein uS12 family. Part of the 30S ribosomal subunit.

It is found in the plastid. It localises to the chloroplast. With S4 and S5 plays an important role in translational accuracy. Located at the interface of the 30S and 50S subunits. The chain is Small ribosomal subunit protein uS12cz/uS12cy (rps12-A) from Platanus occidentalis (Sycamore).